A 152-amino-acid chain; its full sequence is UPF0266 membrane protein YobD (152 aa).

The next 3 membrane-spanning stretches (helical) occupy residues 6–26, 45–65, and 67–87; these read LVLI…QFIM, VDSV…VTSH, and AQMT…IFWI.

It belongs to the UPF0266 family.

The protein resides in the cell inner membrane. The sequence is that of UPF0266 membrane protein YobD from Salmonella arizonae (strain ATCC BAA-731 / CDC346-86 / RSK2980).